Reading from the N-terminus, the 841-residue chain is Envelope glycoprotein H (841 aa).

The signal sequence occupies residues 1–17 (MFALVLAVVILPLWTTA). Asn-18, Asn-45, and Asn-217 each carry an N-linked (GlcNAc...) asparagine; by host glycan. Over 18-802 (NKSYVTPTPA…ERRQAIRMSG (785 aa)) the chain is Virion surface. The interval 246 to 309 (DSGRVEVNIG…DPGPSYRVYL (64 aa)) is interaction with gL. 5 N-linked (GlcNAc...) asparagine; by host glycosylation sites follow: Asn-317, Asn-499, Asn-522, Asn-760, and Asn-783. The chain crosses the membrane as a helical span at residues 803–823 (QYLGASLGGAFLAVVGFGIIG). At 824-841 (WMLCGNSRLREYNKIPLT) the chain is on the intravirion side.

Belongs to the herpesviridae glycoprotein H family. As to quaternary structure, interacts with glycoprotein L (gL); this interaction is necessary for the correct processing and cell surface expression of gH. The heterodimer gH/gL seems to interact with gB trimers during fusion. In terms of processing, N-glycosylated, O-glycosylated, and sialylated.

The protein resides in the virion membrane. Its subcellular location is the host cell membrane. It is found in the host endosome membrane. Its function is as follows. The heterodimer glycoprotein H-glycoprotein L is required for the fusion of viral and plasma membranes leading to virus entry into the host cell. Following initial binding to host receptor, membrane fusion is mediated by the fusion machinery composed of gB and the heterodimer gH/gL. May also be involved in the fusion between the virion envelope and the outer nuclear membrane during virion morphogenesis. The sequence is that of Envelope glycoprotein H from Varicella-zoster virus (strain Dumas) (HHV-3).